The primary structure comprises 232 residues: uncharacterized protein (232 aa).

2 disordered regions span residues 123 to 147 and 169 to 200; these read VAGG…RKYP and AAAD…PSLR.

The protein belongs to the mycobacterial PPE family.

This is an uncharacterized protein from Mycobacterium tuberculosis (strain ATCC 25618 / H37Rv).